We begin with the raw amino-acid sequence, 376 residues long: uncharacterized protein (376 aa).

This sequence belongs to the mimivirus R1 family.

This is an uncharacterized protein from Acanthamoeba polyphaga (Amoeba).